A 168-amino-acid polypeptide reads, in one-letter code: Small ribosomal subunit protein uS9 (168 aa).

A compositionally biased stretch (acidic residues) spans 1 to 15 (MAQNEETTEAVEAEE). Residues 1-34 (MAQNEETTEAVEAEETLTSYTSESGAAEAAAPKK) form a disordered region.

It belongs to the universal ribosomal protein uS9 family.

The protein is Small ribosomal subunit protein uS9 of Arthrobacter sp. (strain FB24).